Consider the following 261-residue polypeptide: Triosephosphate isomerase (261 aa).

10-12 is a binding site for substrate; that stretch reads NWK. The Electrophile role is filled by histidine 100. The active-site Proton acceptor is the glutamate 172. Substrate-binding positions include glycine 178, serine 218, and 239 to 240; that span reads GG.

It belongs to the triosephosphate isomerase family. In terms of assembly, homodimer.

The protein localises to the cytoplasm. The catalysed reaction is D-glyceraldehyde 3-phosphate = dihydroxyacetone phosphate. It participates in carbohydrate biosynthesis; gluconeogenesis. Its pathway is carbohydrate degradation; glycolysis; D-glyceraldehyde 3-phosphate from glycerone phosphate: step 1/1. In terms of biological role, involved in the gluconeogenesis. Catalyzes stereospecifically the conversion of dihydroxyacetone phosphate (DHAP) to D-glyceraldehyde-3-phosphate (G3P). The chain is Triosephosphate isomerase from Saccharopolyspora erythraea (strain ATCC 11635 / DSM 40517 / JCM 4748 / NBRC 13426 / NCIMB 8594 / NRRL 2338).